Here is a 259-residue protein sequence, read N- to C-terminus: Deoxyribose-phosphate aldolase (259 aa).

Asp-102 (proton donor/acceptor) is an active-site residue. Lys-167 functions as the Schiff-base intermediate with acetaldehyde in the catalytic mechanism. Lys-201 functions as the Proton donor/acceptor in the catalytic mechanism.

It belongs to the DeoC/FbaB aldolase family. DeoC type 2 subfamily.

It localises to the cytoplasm. The catalysed reaction is 2-deoxy-D-ribose 5-phosphate = D-glyceraldehyde 3-phosphate + acetaldehyde. It participates in carbohydrate degradation; 2-deoxy-D-ribose 1-phosphate degradation; D-glyceraldehyde 3-phosphate and acetaldehyde from 2-deoxy-alpha-D-ribose 1-phosphate: step 2/2. Catalyzes a reversible aldol reaction between acetaldehyde and D-glyceraldehyde 3-phosphate to generate 2-deoxy-D-ribose 5-phosphate. This Serratia proteamaculans (strain 568) protein is Deoxyribose-phosphate aldolase.